We begin with the raw amino-acid sequence, 537 residues long: Extracellular exo-inulinase inuE (537 aa).

An N-terminal signal peptide occupies residues 1–19 (MARLLKAVTVCALAGIAHA). Residue Asp-41 is part of the active site. N-linked (GlcNAc...) asparagine glycosylation is found at Asn-49, Asn-67, Asn-112, Asn-300, Asn-363, Asn-398, Asn-430, and Asn-531.

It belongs to the glycosyl hydrolase 32 family.

Its subcellular location is the secreted. It catalyses the reaction Hydrolysis of terminal, non-reducing (2-&gt;1)- and (2-&gt;6)-linked beta-D-fructofuranose residues in fructans.. With respect to regulation, the catalytic activity is increased by manganese cathions, but strongly inhibited by other metal ions such as copper, aluminum, silver, iron, nickel, zinc and magnesium cathions. Exo-inulinase involved in utilization of the plant storage polymer inulin, consisting of fructooligosaccharides with a degree of polymerization (DP) value from 2 to 60. Splits off terminal fructose units successively from the non-reducing end of the inulin molecule, and also hydrolyze sucrose and raffinose. The sequence is that of Extracellular exo-inulinase inuE (exoI) from Aspergillus ficuum.